Consider the following 739-residue polypeptide: Phosphoribosylformylglycinamidine synthase subunit PurL (739 aa).

The active site involves histidine 54. Positions 57 and 96 each coordinate ATP. Glutamate 98 is a binding site for Mg(2+). Residues 99-102 and arginine 121 contribute to the substrate site; that span reads SHNH. Histidine 100 (proton acceptor) is an active-site residue. Aspartate 122 contributes to the Mg(2+) binding site. Residue glutamine 245 coordinates substrate. Aspartate 273 is a Mg(2+) binding site. A substrate-binding site is contributed by 317 to 319; that stretch reads ESQ. Residues aspartate 500 and glycine 537 each coordinate ATP. Position 538 (asparagine 538) interacts with Mg(2+). Position 540 (serine 540) interacts with substrate.

Belongs to the FGAMS family. As to quaternary structure, monomer. Part of the FGAM synthase complex composed of 1 PurL, 1 PurQ and 2 PurS subunits.

It localises to the cytoplasm. It carries out the reaction N(2)-formyl-N(1)-(5-phospho-beta-D-ribosyl)glycinamide + L-glutamine + ATP + H2O = 2-formamido-N(1)-(5-O-phospho-beta-D-ribosyl)acetamidine + L-glutamate + ADP + phosphate + H(+). Its pathway is purine metabolism; IMP biosynthesis via de novo pathway; 5-amino-1-(5-phospho-D-ribosyl)imidazole from N(2)-formyl-N(1)-(5-phospho-D-ribosyl)glycinamide: step 1/2. Its function is as follows. Part of the phosphoribosylformylglycinamidine synthase complex involved in the purines biosynthetic pathway. Catalyzes the ATP-dependent conversion of formylglycinamide ribonucleotide (FGAR) and glutamine to yield formylglycinamidine ribonucleotide (FGAM) and glutamate. The FGAM synthase complex is composed of three subunits. PurQ produces an ammonia molecule by converting glutamine to glutamate. PurL transfers the ammonia molecule to FGAR to form FGAM in an ATP-dependent manner. PurS interacts with PurQ and PurL and is thought to assist in the transfer of the ammonia molecule from PurQ to PurL. The polypeptide is Phosphoribosylformylglycinamidine synthase subunit PurL (Bacillus cytotoxicus (strain DSM 22905 / CIP 110041 / 391-98 / NVH 391-98)).